The sequence spans 58 residues: UPF0391 membrane protein OCAR_5266/OCA5_c27040 (58 aa).

A run of 2 helical transmembrane segments spans residues 4–24 (WVVTFLIIALVAGLLGFGGIA) and 30–50 (IAKIVFFIAIVLFAVSAVVGL).

The protein belongs to the UPF0391 family.

The protein resides in the cell membrane. The sequence is that of UPF0391 membrane protein OCAR_5266/OCA5_c27040 from Afipia carboxidovorans (strain ATCC 49405 / DSM 1227 / KCTC 32145 / OM5) (Oligotropha carboxidovorans).